The chain runs to 479 residues: mRNA export factor ICP27 homolog (479 aa).

Residues Met1 to Ser15 are compositionally biased toward low complexity. 2 disordered regions span residues Met1–Val77 and Lys91–Trp210. The segment covering Thr35–Gly44 has biased composition (acidic residues). Positions Glu132–Gly142 are enriched in basic and acidic residues. Zn(2+)-binding residues include Cys354, His445, Cys449, and Cys454. A CHC2-type zinc finger spans residues Cys354 to Cys454.

The protein belongs to the HHV-1 ICP27 protein family. Interacts with host XPO1 and with the XPO1 export pathway components small GTPase RAN and nucleoporin NUP214. Interacts with host SPEN, OTT1 and OTT3. Interacts with host SRSF1, SRSF3, SRSF7 and SRPK1. Interacts with host DHX9; this interaction may have an inhibitory effect on virion production. Interacts (via N-terminus) with host NXF1; this interaction plays a role in mRNA export. In terms of processing, phosphorylated by cellular protein kinase CK2.

It localises to the host nucleus. The protein resides in the host cytoplasm. Functionally, promotes the nuclear export of a subset of early and late viral mRNAs by interacting with mRNAs and cellular export proteins. Additionally may prevent the establishment of cellular antiviral state, by acting as an alternative splicing factor for cellular RNAs such as STAT1, resulting in a STAT1 mRNA incapable of producing the STAT1alpha isoform. The sequence is that of mRNA export factor ICP27 homolog from Homo sapiens (Human).